Here is a 147-residue protein sequence, read N- to C-terminus: Leghemoglobin 6 (147 aa).

The Globin domain occupies 2–147 (SFTDKQEALV…LATEIKKAMS (146 aa)). A nitrated tyrosine mark is found at tyrosine 25 and tyrosine 30. Serine 45 is a binding site for heme b. Serine 45 is modified (phosphoserine). Residue histidine 62 coordinates O2. Heme b contacts are provided by lysine 65, histidine 94, and lysine 97. The residue at position 135 (tyrosine 135) is a Nitrated tyrosine.

It belongs to the plant globin family. As to quaternary structure, monomer. Post-translationally, nitrated in effective nodules and particularly in hypoxic conditions; this mechanism may play a protective role in the symbiosis by buffering toxic peroxynitrite NO(2)(-). Nitration level decrease during nodule senescence. Phosphorylation at Ser-45 disrupts the molecular environment of its porphyrin ring oxygen binding pocket, thus leading to a reduced oxygen consumption and to the delivery of oxygen O(2) to symbiosomes. As to expression, root nodules.

Its subcellular location is the cytoplasm. It localises to the cytosol. It is found in the nucleus. Leghemoglobin that reversibly binds oxygen O(2) through a pentacoordinated heme iron. In root nodules, facilitates the diffusion of oxygen to the bacteroids while preventing the bacterial nitrogenase from being inactivated by buffering dioxygen, nitric oxide and carbon monoxide, and promoting the formation of reactive oxygen species (ROS, e.g. H(2)O(2)). This role is essential for symbiotic nitrogen fixation (SNF). The chain is Leghemoglobin 6 from Medicago truncatula (Barrel medic).